The primary structure comprises 159 residues: Probable acetolactate synthase small subunit (159 aa).

The ACT domain occupies 4 to 78; sequence TIAVLVENKP…ETIKVSEITE (75 aa).

This sequence belongs to the acetolactate synthase small subunit family. In terms of assembly, dimer of large and small chains.

It carries out the reaction 2 pyruvate + H(+) = (2S)-2-acetolactate + CO2. It functions in the pathway amino-acid biosynthesis; L-isoleucine biosynthesis; L-isoleucine from 2-oxobutanoate: step 1/4. It participates in amino-acid biosynthesis; L-valine biosynthesis; L-valine from pyruvate: step 1/4. The chain is Probable acetolactate synthase small subunit (ilvH) from Archaeoglobus fulgidus (strain ATCC 49558 / DSM 4304 / JCM 9628 / NBRC 100126 / VC-16).